A 173-amino-acid polypeptide reads, in one-letter code: L-2,4-diaminobutyric acid acetyltransferase (173 aa).

Residues 14–170 enclose the N-acetyltransferase domain; the sequence is WVFRRPTQED…TEYLYRIPLQ (157 aa).

This sequence belongs to the acetyltransferase family. EctA subfamily.

It catalyses the reaction L-2,4-diaminobutanoate + acetyl-CoA = (2S)-4-acetamido-2-aminobutanoate + CoA + H(+). The protein operates within amine and polyamine biosynthesis; ectoine biosynthesis; L-ectoine from L-aspartate 4-semialdehyde: step 2/3. In terms of biological role, catalyzes the acetylation of L-2,4-diaminobutyrate (DABA) to gamma-N-acetyl-alpha,gamma-diaminobutyric acid (ADABA) with acetyl coenzyme A. The chain is L-2,4-diaminobutyric acid acetyltransferase (ectA) from Vibrio cholerae serotype O1 (strain ATCC 39315 / El Tor Inaba N16961).